The sequence spans 156 residues: Small ribosomal subunit protein uS7 (156 aa).

Belongs to the universal ribosomal protein uS7 family. Part of the 30S ribosomal subunit. Contacts proteins S9 and S11.

Functionally, one of the primary rRNA binding proteins, it binds directly to 16S rRNA where it nucleates assembly of the head domain of the 30S subunit. Is located at the subunit interface close to the decoding center, probably blocks exit of the E-site tRNA. This chain is Small ribosomal subunit protein uS7, found in Chromohalobacter salexigens (strain ATCC BAA-138 / DSM 3043 / CIP 106854 / NCIMB 13768 / 1H11).